The following is an 852-amino-acid chain: Pentatricopeptide repeat-containing protein At5g02830, chloroplastic (852 aa).

The transit peptide at 1–25 directs the protein to the chloroplast; the sequence is MRDFVIVFGSSSAITNPHHHHRRCY. Positions 17 to 60 are disordered; the sequence is PHHHHRRCYATAPESNRKTKSNSSFTKLLPSLPQQHSPSPASVS. Positions 44–58 are enriched in low complexity; it reads LLPSLPQQHSPSPAS. PPR repeat units lie at residues 334 to 364, 373 to 407, 408 to 442, 443 to 477, 525 to 557, 558 to 592, 593 to 627, and 628 to 665; these read DMTSYNILLKTCCLAGRVDLAQDIYKEAKRM, DAFTYCTIIKVFADAKMWKWALKVKDDMKSVGVTP, NTHTWSSLISACANAGLVEQANHLFEEMLASGCEP, NSQCFNILLHACVEACQYDRAFRLFQSWKGSSVNE, TTATYNILLKACGTDYYRGKELMDEMKSLGLSP, NQITWSTLIDMCGGSGDVEGAVRILRTMHSAGTRP, DVVAYTTAIKICAENKCLKLAFSLFEEMRRYQIKP, and NWVTYNTLLKARSKYGSLLEVRQCLAIYQDMRNAGYKP.

The protein belongs to the PPR family. P subfamily.

The protein resides in the plastid. The protein localises to the chloroplast. The protein is Pentatricopeptide repeat-containing protein At5g02830, chloroplastic of Arabidopsis thaliana (Mouse-ear cress).